Consider the following 153-residue polypeptide: Protein Smg homolog (153 aa).

This sequence belongs to the Smg family.

The sequence is that of Protein Smg homolog from Neisseria meningitidis serogroup B (strain ATCC BAA-335 / MC58).